A 1776-amino-acid chain; its full sequence is 6-methylsalicylic acid synthase (1776 aa).

Over residues 1–18 the composition is skewed to low complexity; it reads MHSVSPSTYPSGGTSPAP. Residues 1–26 are disordered; it reads MHSVSPSTYPSGGTSPAPADTPGTEY. A Ketosynthase family 3 (KS3) domain is found at 32 to 457; the sequence is SNDVAVVGMA…GTVSHAVIEE (426 aa). Active-site for beta-ketoacyl synthase activity residues include cysteine 204, histidine 339, and histidine 379. The malonyl-CoA:ACP transacylase (MAT) domain stretch occupies residues 567 to 880; sequence VWVFSGHGAQ…IAQLHCRGAE (314 aa). Residues 925 to 1044 form an N-terminal hotdog fold region; that stretch reads HTLLGQRIPV…AYWDRKVLGS (120 aa). The interval 925-1196 is dehydratase (DH) domain; the sequence is HTLLGQRIPV…FTAMRFSEIE (272 aa). The PKS/mFAS DH domain maps to 925–1201; that stretch reads HTLLGQRIPV…FSEIEGTPGV (277 aa). The active-site Proton acceptor; for dehydratase activity is the histidine 957. Positions 1058 to 1201 are C-terminal hotdog fold; it reads TTKLADNFSI…FSEIEGTPGV (144 aa). The Proton donor; for dehydratase activity role is filled by aspartate 1113. The tract at residues 1205–1657 is product template (PT) domain; sequence MESLVHQIAW…LRSLAIDDGE (453 aa). A Carrier domain is found at 1700 to 1774; that stretch reads AYLDEKIRGC…HLVVWFAEKI (75 aa). Serine 1734 bears the O-(pantetheine 4'-phosphoryl)serine mark.

It is found in the cytoplasm. The protein localises to the cytosol. The enzyme catalyses 3 malonyl-CoA + acetyl-CoA + NADPH + 3 H(+) = 6-methylsalicylate + 3 CO2 + NADP(+) + 4 CoA + H2O. Its pathway is mycotoxin biosynthesis; patulin biosynthesis. Functionally, 6-methylsalicylic acid synthase; part of the gene cluster that mediates the biosynthesis of patulin, an acetate-derived tetraketide mycotoxin produced by several fungal species that shows antimicrobial properties against several bacteria. PatK catalyzes the first step of the pathway which is the synthesis of 6-methylsalicylic acid via condensation of 1 acetate and 3 malonate units. The pathway begins with the synthesis of 6-methylsalicylic acid by the polyketide synthase (PKS) patK via condensation of acetate and malonate units. The 6-methylsalicylic acid decarboxylase patG then catalyzes the decarboxylation of 6-methylsalicylic acid to yield m-cresol (also known as 3-methylphenol). These first reactions occur in the cytosol. The intermediate m-cresol is then transported into the endoplasmic reticulum where the cytochrome P450 monooxygenase patH converts it to m-hydroxybenzyl alcohol, which is further converted to gentisyl alcohol by the cytochrome P450 monooxygenase patI. The oxidoreductases patJ and patO further convert gentisyl alcohol to isoepoxydon in the vacuole. PatN catalyzes then the transformation of isoepoxydon into phyllostine. The cluster protein patF is responsible for the conversion from phyllostine to neopatulin whereas the alcohol dehydrogenase patD converts neopatulin to E-ascladiol. The steps between isoepoxydon and E-ascladiol occur in the cytosol, and E-ascladiol is probably secreted to the extracellular space by one of the cluster-specific transporters patC or patM. Finally, the secreted patulin synthase patE catalyzes the conversion of E-ascladiol to patulin. The chain is 6-methylsalicylic acid synthase from Penicillium expansum (Blue mold rot fungus).